The sequence spans 368 residues: Flagellar P-ring protein (368 aa).

A signal peptide spans 1-22 (MLIPLARAVLALALLGAGAAHA).

Belongs to the FlgI family. The basal body constitutes a major portion of the flagellar organelle and consists of four rings (L,P,S, and M) mounted on a central rod.

It localises to the periplasm. The protein resides in the bacterial flagellum basal body. Its function is as follows. Assembles around the rod to form the L-ring and probably protects the motor/basal body from shearing forces during rotation. This is Flagellar P-ring protein from Bordetella bronchiseptica (strain ATCC BAA-588 / NCTC 13252 / RB50) (Alcaligenes bronchisepticus).